A 176-amino-acid chain; its full sequence is Ribosome rescue factor SmrB (176 aa).

In terms of domain architecture, Smr spans 98–173; it reads LDVHGLNQDQ…RSTAILFLIH (76 aa).

It belongs to the SmrB family. Associates with collided ribosomes, but not with correctly translating polysomes.

Acts as a ribosome collision sensor. Detects stalled/collided disomes (pairs of ribosomes where the leading ribosome is stalled and a second ribosome has collided with it) and endonucleolytically cleaves mRNA at the 5' boundary of the stalled ribosome. Stalled/collided disomes form a new interface (primarily via the 30S subunits) that binds SmrB. Cleaved mRNA becomes available for tmRNA ligation, leading to ribosomal subunit dissociation and rescue of stalled ribosomes. This chain is Ribosome rescue factor SmrB, found in Buchnera aphidicola subsp. Baizongia pistaciae (strain Bp).